We begin with the raw amino-acid sequence, 373 residues long: MFLNGQGGQRPPTVASPPLNVRGSISSDFNALGRSRNNSDAMDIYTITDRGPAAERDPAAGRWHANGSPSINSTSSKNPDRYPCYQENGRTYHGYRKGIYMLPCDEQEQDRLDIFHKLFTVARVSDGLIYAPHPTNGRFLDLGCGTGIWAIDVANKYPEAFVVGVDLAPIQPPNHPRNCDFYAPFDFESLWALGEDSWDLIHMQMGSGSVASWPNLYRRIYSHLRPGAWFEQVEIDFEPRCDDRSLEGLAIRQWYQLLKQATEETMRPVAHNSRETIRNLQEAGFTEIDHQMVGLPLNPWHQDEHERRVARWYNLAISESIETMSLAPFSRVFGWPIERIKQIAADVKSEAFNKEIHTYNILHIYQARKPLAN.

2 disordered regions span residues M1 to V21 and A53 to R81. Residues G67–K77 are compositionally biased toward polar residues.

This sequence belongs to the methyltransferase superfamily. LaeA methyltransferase family. As to quaternary structure, component of the heterotrimeric velvet complex composed of laeA, veA and velB; VeA acting as a bridging protein between laeA and velB.

The protein localises to the nucleus. The enzyme catalyses L-methionyl-[protein] + S-adenosyl-L-methionine = S-methyl-L-methionyl-[protein] + S-adenosyl-L-homocysteine. In terms of biological role, methyltransferase that performs automethylation. No other methyl-accepting substrate has been identified yet. Component of the velvet transcription factor complex that acts as a global regulator for secondary metabolite gene expression. Controls the expression of the cyclopiazonic acid (CPA) gene clusters. Regulates also pigmentation and conidial head morphology. This is Secondary metabolism regulator laeA from Aspergillus fumisynnematus.